Here is a 486-residue protein sequence, read N- to C-terminus: Glutamyl-tRNA(Gln) amidotransferase subunit A (486 aa).

Active-site charge relay system residues include K75 and S150. S174 functions as the Acyl-ester intermediate in the catalytic mechanism.

This sequence belongs to the amidase family. GatA subfamily. In terms of assembly, heterotrimer of A, B and C subunits.

It carries out the reaction L-glutamyl-tRNA(Gln) + L-glutamine + ATP + H2O = L-glutaminyl-tRNA(Gln) + L-glutamate + ADP + phosphate + H(+). Functionally, allows the formation of correctly charged Gln-tRNA(Gln) through the transamidation of misacylated Glu-tRNA(Gln) in organisms which lack glutaminyl-tRNA synthetase. The reaction takes place in the presence of glutamine and ATP through an activated gamma-phospho-Glu-tRNA(Gln). This is Glutamyl-tRNA(Gln) amidotransferase subunit A from Nostoc punctiforme (strain ATCC 29133 / PCC 73102).